Reading from the N-terminus, the 375-residue chain is Kininogen (375 aa).

An N-terminal signal peptide occupies residues 1–23; the sequence is MKLGVRLCVLVVFSLQLWGPGQG. Cystatin kininogen-type domains are found at residues 35–139 and 156–260; these read CDDK…VEAP and VESE…GPLD. Asn-74 is a glycosylation site (N-linked (GlcNAc) asparagine). 4 cysteine pairs are disulfide-bonded: Cys-91–Cys-102, Cys-115–Cys-133, Cys-211–Cys-223, and Cys-234–Cys-254. Asn-235 carries an N-linked (GlcNAc) asparagine glycan. The interval 283–375 is disordered; that stretch reads EVKTTQASTA…LSDLDLLGKK (93 aa).

N-glycosylated, with sialylated biantennary complex-type glycans. In terms of processing, O-glycosylated, sialylated oligosaccharides. Post-translationally, bradykinin is released from kininogen by kallikrein. The N-terminus is blocked. In terms of tissue distribution, expressed in the skin, liver, intestine, spleen, pancreas and kidney.

It is found in the cytoplasm. The protein resides in the vacuole. In terms of biological role, inhibits papain and ficin (cysteine proteinases) but not trypsin (a serine proteinase). This Salmo salar (Atlantic salmon) protein is Kininogen (LOC106584303).